Reading from the N-terminus, the 428-residue chain is Gamma-glutamyl phosphate reductase (428 aa).

The protein belongs to the gamma-glutamyl phosphate reductase family.

The protein resides in the cytoplasm. The catalysed reaction is L-glutamate 5-semialdehyde + phosphate + NADP(+) = L-glutamyl 5-phosphate + NADPH + H(+). Its pathway is amino-acid biosynthesis; L-proline biosynthesis; L-glutamate 5-semialdehyde from L-glutamate: step 2/2. Catalyzes the NADPH-dependent reduction of L-glutamate 5-phosphate into L-glutamate 5-semialdehyde and phosphate. The product spontaneously undergoes cyclization to form 1-pyrroline-5-carboxylate. In Anaeromyxobacter sp. (strain Fw109-5), this protein is Gamma-glutamyl phosphate reductase.